Here is a 551-residue protein sequence, read N- to C-terminus: Glucose-6-phosphate isomerase 2 (551 aa).

Glutamate 359 functions as the Proton donor in the catalytic mechanism. Residues histidine 390 and lysine 514 contribute to the active site.

The protein belongs to the GPI family.

Its subcellular location is the cytoplasm. The enzyme catalyses alpha-D-glucose 6-phosphate = beta-D-fructose 6-phosphate. The protein operates within carbohydrate biosynthesis; gluconeogenesis. Its pathway is carbohydrate degradation; glycolysis; D-glyceraldehyde 3-phosphate and glycerone phosphate from D-glucose: step 2/4. Functionally, catalyzes the reversible isomerization of glucose-6-phosphate to fructose-6-phosphate. This chain is Glucose-6-phosphate isomerase 2, found in Streptomyces coelicolor (strain ATCC BAA-471 / A3(2) / M145).